The following is a 1170-amino-acid chain: Error-prone DNA polymerase (1170 aa).

2 disordered regions span residues 867–899 and 1129–1170; these read RGAR…LHND and IPHG…RDFH. The span at 886–899 shows a compositional bias: basic and acidic residues; it reads PRNDNDRQIPLHND.

The protein belongs to the DNA polymerase type-C family. DnaE2 subfamily.

It is found in the cytoplasm. The catalysed reaction is DNA(n) + a 2'-deoxyribonucleoside 5'-triphosphate = DNA(n+1) + diphosphate. DNA polymerase involved in damage-induced mutagenesis and translesion synthesis (TLS). It is not the major replicative DNA polymerase. This is Error-prone DNA polymerase from Bradyrhizobium sp. (strain ORS 278).